The chain runs to 570 residues: Glutamate--tRNA ligase (570 aa).

The 'HIGH' region signature appears at 107-117; that stretch reads PNPDFVLHLGS.

It belongs to the class-I aminoacyl-tRNA synthetase family. Glutamate--tRNA ligase type 2 subfamily.

It localises to the cytoplasm. The enzyme catalyses tRNA(Glu) + L-glutamate + ATP = L-glutamyl-tRNA(Glu) + AMP + diphosphate. Functionally, catalyzes the attachment of glutamate to tRNA(Glu) in a two-step reaction: glutamate is first activated by ATP to form Glu-AMP and then transferred to the acceptor end of tRNA(Glu). The sequence is that of Glutamate--tRNA ligase from Pyrobaculum islandicum (strain DSM 4184 / JCM 9189 / GEO3).